The primary structure comprises 244 residues: EEF1A lysine methyltransferase 2 (244 aa).

The interval 1–27 (MNADAEGHSGAVVPAQSPEGSSAADDF) is disordered. Position 21 is a phosphoserine (serine 21).

This sequence belongs to the class I-like SAM-binding methyltransferase superfamily. EFM4 family.

The protein resides in the cytoplasm. It is found in the nucleus. It catalyses the reaction L-lysyl-[protein] + 3 S-adenosyl-L-methionine = N(6),N(6),N(6)-trimethyl-L-lysyl-[protein] + 3 S-adenosyl-L-homocysteine + 3 H(+). Functionally, protein-lysine methyltransferase that selectively catalyzes the trimethylation of EEF1A at 'Lys-318'. This Mus musculus (Mouse) protein is EEF1A lysine methyltransferase 2.